The primary structure comprises 66 residues: Large ribosomal subunit protein bL35 (66 aa).

The disordered stretch occupies residues 20–41 (GKVMSAQRGKRHGMIKRTKKQI). Over residues 27 to 41 (RGKRHGMIKRTKKQI) the composition is skewed to basic residues.

Belongs to the bacterial ribosomal protein bL35 family.

The polypeptide is Large ribosomal subunit protein bL35 (Rhodopseudomonas palustris (strain BisB5)).